Reading from the N-terminus, the 648-residue chain is MWPQARLPPHPAMAEETRQSKLAAAKRKLKEYWQRNSPGVPAGAKRNRKTNGSIHETATSGGCHSPGDSATGIHGESPTSSATLKDLESPCQELAVVPDSRSVKVSQLKNTIKSLKQQNKQVEHQLEEEKKANNEKQKAERELEVQIQRLNIQKGKLNTDLYHTKRSLRYFEEESKDLAVRLQHSLQRKGELERALSAVTATQKKKAERQFSSRSKARMEWKLEQSMREQALLKAQLTQLKESLKEVQLERDEYAEHLKGERARWQQRMRKMSQEVCSLKKEKKHDKYRVEKLERSLSKLKHQMAEPLPPEPPAVPSEVELQHLRKELERVAGELQAQVEYNQRISLLNEGQKERLREQEERLQEQQERLPEQEERLQQLAEPQNSFKELNNENKSVLQLEQQVKELQEKLGKERLEAASQQKQQLTAQLSLMALPGEGDGGGHLDSEGEEAPRPIPSIPQDLESREAMSGFMDHLEEKADLSELVEKEELGFFQYYRERCHQKVYHPITKPGGSAKDAAPGGGHHQAGPGQGGDEGEAAGAAGDGVAAGGDYKGHSKFLVTAQNPAHEPSPGAPAPQELGAAHKHGDLCEVSLTDSVEPVQGEAREGSPHDNPTAQPIVQDHQEHPGLGSNCCVPFFCWAWLPRRRR.

The span at Met-1–Pro-11 shows a compositional bias: pro residues. Disordered regions lie at residues Met-1–Leu-84 and Asn-119–Ala-139. Residues Thr-50–Gly-62 show a composition bias toward polar residues. 3 coiled-coil regions span residues Val-105–Asp-160, Leu-223–Glu-275, and Glu-318–Gln-424. Residues Gln-121–Ala-139 are compositionally biased toward basic and acidic residues. Disordered stretches follow at residues Leu-356–Arg-376, Ala-434–Gln-461, Pro-508–Ala-549, and Pro-600–Gln-624. The span at Gly-441–Pro-453 shows a compositional bias: basic and acidic residues. Over residues Pro-521 to Gly-534 the composition is skewed to gly residues.

Belongs to the GOLGA8 family.

The protein is Golgin subfamily A member 8G of Homo sapiens (Human).